A 609-amino-acid polypeptide reads, in one-letter code: Glutamine--fructose-6-phosphate aminotransferase [isomerizing] (609 aa).

Cys2 serves as the catalytic Nucleophile; for GATase activity. A Glutamine amidotransferase type-2 domain is found at 2 to 218 (CGIVGAIAQR…EGDIAEITRR (217 aa)). 2 consecutive SIS domains span residues 286 to 426 (ADEL…LKGL) and 458 to 599 (LAED…VDQP). Lys604 acts as the For Fru-6P isomerization activity in catalysis.

In terms of assembly, homodimer.

It is found in the cytoplasm. The catalysed reaction is D-fructose 6-phosphate + L-glutamine = D-glucosamine 6-phosphate + L-glutamate. Its function is as follows. Catalyzes the first step in hexosamine metabolism, converting fructose-6P into glucosamine-6P using glutamine as a nitrogen source. This is Glutamine--fructose-6-phosphate aminotransferase [isomerizing] from Shigella flexneri.